A 211-amino-acid polypeptide reads, in one-letter code: Homeobox protein Rhox5 (211 aa).

Residues 38 to 129 form a disordered region; that stretch reads FFQAGEGRDE…PLRRPGSTQR (92 aa). 2 stretches are compositionally biased toward gly residues: residues 52 to 62 and 70 to 84; these read GQPGEGAVGTE and GGEG…GPVG. A compositionally biased stretch (basic and acidic residues) spans 102–119; that stretch reads HEPVAEGTESVKSEDKQM. A DNA-binding region (homeobox; atypical) is located at residues 119–176; sequence MPLRRPGSTQRRLAELERILLSSGSSSGGRSLIDGWISVCPECRNWFKIRRAAYRRNR.

In terms of tissue distribution, highly expressed in placenta. Lower levels in testis, epididymis, ovary and skeletal muscle.

The protein resides in the nucleus. Transcription factor required for differentiation of embryonic stem cells (ESCs) into primordial germ cells. In Rattus norvegicus (Rat), this protein is Homeobox protein Rhox5 (Rhox5).